Here is a 467-residue protein sequence, read N- to C-terminus: Cytochrome P450 85A3 (467 aa).

The chain crosses the membrane as a helical span at residues 2-22 (AIFLIIFVVFFGFCILSTPLF). Cys-417 contacts heme.

Belongs to the cytochrome P450 family. It depends on heme as a cofactor. In terms of tissue distribution, expressed in fruits.

It localises to the membrane. It carries out the reaction 6-deoxocastasterone + reduced [NADPH--hemoprotein reductase] + O2 = 6alpha-hydroxycastasterone + oxidized [NADPH--hemoprotein reductase] + H2O + H(+). It catalyses the reaction 6alpha-hydroxycastasterone + reduced [NADPH--hemoprotein reductase] + O2 = castasterone + oxidized [NADPH--hemoprotein reductase] + 2 H2O + H(+). The enzyme catalyses castasterone + reduced [NADPH--hemoprotein reductase] + O2 = brassinolide + oxidized [NADPH--hemoprotein reductase] + H2O + H(+). The catalysed reaction is 6-deoxocastasterone + 2 reduced [NADPH--hemoprotein reductase] + 2 O2 = castasterone + 2 oxidized [NADPH--hemoprotein reductase] + 3 H2O + 2 H(+). It participates in plant hormone biosynthesis; brassinosteroid biosynthesis. In terms of biological role, catalyzes the C6-oxidation step in brassinosteroids biosynthesis. Converts 6-deoxocastasterone (6-deoxoCS) to castasterone (CS), and castasterone (CS) to brassinolide (BL). The protein is Cytochrome P450 85A3 of Solanum lycopersicum (Tomato).